The following is an 875-amino-acid chain: Alanine--tRNA ligase (875 aa).

Histidine 596, histidine 600, cysteine 700, and histidine 704 together coordinate Zn(2+).

It belongs to the class-II aminoacyl-tRNA synthetase family. Requires Zn(2+) as cofactor.

It is found in the cytoplasm. The enzyme catalyses tRNA(Ala) + L-alanine + ATP = L-alanyl-tRNA(Ala) + AMP + diphosphate. In terms of biological role, catalyzes the attachment of alanine to tRNA(Ala) in a two-step reaction: alanine is first activated by ATP to form Ala-AMP and then transferred to the acceptor end of tRNA(Ala). Also edits incorrectly charged Ser-tRNA(Ala) and Gly-tRNA(Ala) via its editing domain. The protein is Alanine--tRNA ligase of Methanocella arvoryzae (strain DSM 22066 / NBRC 105507 / MRE50).